A 334-amino-acid polypeptide reads, in one-letter code: uncharacterized protein (334 aa).

This sequence belongs to the MG414/MG415 family.

This is an uncharacterized protein from Mycoplasma pneumoniae (strain ATCC 29342 / M129 / Subtype 1) (Mycoplasmoides pneumoniae).